An 86-amino-acid chain; its full sequence is RNA-binding protein Hfq (86 aa).

The 62-residue stretch at 10 to 71 folds into the Sm domain; sequence DLFLNNARKE…VSTIQPGKYI (62 aa).

The protein belongs to the Hfq family. As to quaternary structure, homohexamer.

In terms of biological role, RNA chaperone that binds small regulatory RNA (sRNAs) and mRNAs to facilitate mRNA translational regulation in response to envelope stress, environmental stress and changes in metabolite concentrations. Also binds with high specificity to tRNAs. This is RNA-binding protein Hfq from Clostridioides difficile (strain 630) (Peptoclostridium difficile).